We begin with the raw amino-acid sequence, 190 residues long: MIHADHDDNLPDDEEGLPLPPSKSQRKRDMHALQDLGEQLVALSVDQLKKVPMPEALADAVREAKRMTKHEARRRQMQYVGKLMRHIDPEPIQAQLDVFNGLSKAEIARQHRLERLRSEVLDDEKVLQRIVETWPEADFQQLRTLRRNALKEREQNKPPRAFRELFRVLRDLDVGAAAPPADEPRDDDEE.

Residues Met-1–His-31 are disordered.

Belongs to the DarP family.

The protein localises to the cytoplasm. Functionally, member of a network of 50S ribosomal subunit biogenesis factors which assembles along the 30S-50S interface, preventing incorrect 23S rRNA structures from forming. Promotes peptidyl transferase center (PTC) maturation. The polypeptide is Dual-action ribosomal maturation protein DarP (Aromatoleum aromaticum (strain DSM 19018 / LMG 30748 / EbN1) (Azoarcus sp. (strain EbN1))).